The primary structure comprises 337 residues: Major envelope glycoprotein (337 aa).

N76, N114, N271, and N301 each carry an N-linked (GlcNAc...) asparagine; by host glycan.

Belongs to the baculoviridae gp64 family. Post-translationally, palmitoylated.

The protein localises to the virion membrane. The protein resides in the host cell membrane. Envelope phosphoglycoprotein which mediates the fusion of viral and host endosomal membranes leading to virus entry into the host cell. The chain is Major envelope glycoprotein (GP67) from Lepidoptera (butterflies and moths).